The primary structure comprises 454 residues: Mitochondrial distribution and morphology protein 10 (454 aa).

This sequence belongs to the MDM10 family. In terms of assembly, component of the ER-mitochondria encounter structure (ERMES) or MDM complex, composed of MMM1, MDM10, MDM12 and MDM34. Associates with the mitochondrial outer membrane sorting assembly machinery SAM(core) complex.

The protein resides in the mitochondrion outer membrane. In terms of biological role, component of the ERMES/MDM complex, which serves as a molecular tether to connect the endoplasmic reticulum and mitochondria. Components of this complex are involved in the control of mitochondrial shape and protein biogenesis and may function in phospholipid exchange. MDM10 is involved in the late assembly steps of the general translocase of the mitochondrial outer membrane (TOM complex). Functions in the TOM40-specific route of the assembly of outer membrane beta-barrel proteins, including the association of TOM40 with the receptor TOM22 and small TOM proteins. Can associate with the SAM(core) complex as well as the MDM12-MMM1 complex, both involved in late steps of the major beta-barrel assembly pathway, that is responsible for biogenesis of all outer membrane beta-barrel proteins. May act as a switch that shuttles between both complexes and channels precursor proteins into the TOM40-specific pathway. Plays a role in mitochondrial morphology and in the inheritance of mitochondria. In Candida tropicalis (strain ATCC MYA-3404 / T1) (Yeast), this protein is Mitochondrial distribution and morphology protein 10.